The following is a 149-amino-acid chain: Protein K7 (149 aa).

It belongs to the orthopoxvirus OPG044 family. In terms of assembly, interacts with DDX3; this interaction inhibits DDX3 and suppresses DDX3-mediated IFN-beta promoter induction. Interacts with TRAF6 and IRAK2; these interactions suppress TLR-dependent NF-KappaB activation.

The protein resides in the host cytoplasm. In terms of biological role, virulence factor that affects the acute immune response to infection. Bcl-2-like protein which, through its interaction with the DEAD box RNA helicase DDX3X/DDX3, prevents TBK1/IKKepsilon-mediated IRF3 activation. Contributes to virulence by binding to the host TRAF6 and IRAK2 and preventing host NF-kappa-B activation. The protein is Protein K7 (OPG044) of Cynomys gunnisoni (Gunnison's prairie dog).